Here is a 318-residue protein sequence, read N- to C-terminus: Rhomboid-related protein 4 (318 aa).

Over 1 to 21 (MQRRSRGINTGLILLLSQIFH) the chain is Cytoplasmic. The chain crosses the membrane as a helical span at residues 22–42 (VGINNIPPVTLATLALNIWFF). Residues 43 to 106 (LNPQKPLYSS…RRLGSRWFAY (64 aa)) lie on the Extracellular side of the membrane. The helical transmembrane segment at 107 to 127 (VITTFSVLTGVVYLLLQFAVA) threads the bilayer. Over 128 to 137 (EFMDEPDFKR) the chain is Cytoplasmic. Residues 138-154 (SCAVGFSGVLFALKVLN) form a helical membrane-spanning segment. Residue serine 144 is the Nucleophile of the active site. The Extracellular segment spans residues 155-179 (NHYCPGGFVNILGFPVPNRFACWVE). Residues 180-204 (LVAIHLFSPGTSFAGHQAGILVGLM) form a helical membrane-spanning segment. The active site involves histidine 195. Topologically, residues 205–318 (YTQGPLKKIM…RQRLHRFDSQ (114 aa)) are cytoplasmic. The ubiquitin-binding domain (UBD) stretch occupies residues 271-286 (SEEEQLERALQASLWD). Residues 285–318 (WDRGHTRNSPPPYGFHLSPEEEMRRQRLHRFDSQ) are disordered. The span at 302-318 (SPEEEMRRQRLHRFDSQ) shows a compositional bias: basic and acidic residues. The segment at 303-318 (PEEEMRRQRLHRFDSQ) is VCP/p97-interacting motif (VIM).

The protein belongs to the peptidase S54 family. In terms of assembly, interacts with BIK and STEAP3. Interacts (via C-terminal domain) with VCP. Interacts with ubiquitin and ubiquitinated proteins.

It localises to the endoplasmic reticulum membrane. The protein localises to the mitochondrion membrane. It catalyses the reaction Cleaves type-1 transmembrane domains using a catalytic dyad composed of serine and histidine that are contributed by different transmembrane domains.. Inhibited by aprotinin. In terms of biological role, intramembrane-cleaving serine protease that cleaves single transmembrane or multi-pass membrane proteins in the hydrophobic plane of the membrane, luminal loops and juxtamembrane regions. Involved in regulated intramembrane proteolysis and the subsequent release of functional polypeptides from their membrane anchors. Functional component of endoplasmic reticulum-associated degradation (ERAD) for misfolded membrane proteins. Required for the degradation process of some specific misfolded endoplasmic reticulum (ER) luminal proteins. Participates in the transfer of misfolded proteins from the ER to the cytosol, where they are destroyed by the proteasome in a ubiquitin-dependent manner. Functions in BIK, MPZ, PKD1, PTCRA, RHO, STEAP3 and TRAC processing. Involved in the regulation of exosomal secretion; inhibits the TSAP6-mediated secretion pathway. Involved in the regulation of apoptosis; modulates BIK-mediated apoptotic activity. Also plays a role in the regulation of spermatogenesis; inhibits apoptotic activity in spermatogonia. The protein is Rhomboid-related protein 4 (RHBDD1) of Pongo abelii (Sumatran orangutan).